The following is a 532-amino-acid chain: Pyruvate kinase (532 aa).

Substrate is bound at residue arginine 63. Positions 65, 67, 99, and 100 each coordinate K(+). Position 65–68 (65–68 (NFSH)) interacts with ATP. Residues arginine 106 and lysine 191 each coordinate ATP. Glutamate 256 lines the Mg(2+) pocket. Residues glycine 279, aspartate 280, and threonine 312 each coordinate substrate. Aspartate 280 is a binding site for Mg(2+).

The protein belongs to the pyruvate kinase family. Homotetramer. Mg(2+) serves as cofactor. It depends on K(+) as a cofactor.

It carries out the reaction pyruvate + ATP = phosphoenolpyruvate + ADP + H(+). It functions in the pathway carbohydrate degradation; glycolysis; pyruvate from D-glyceraldehyde 3-phosphate: step 5/5. The protein is Pyruvate kinase (pkiA) of Agaricus bisporus (White button mushroom).